Here is a 95-residue protein sequence, read N- to C-terminus: Aspartyl/glutamyl-tRNA(Asn/Gln) amidotransferase subunit C (95 aa).

This sequence belongs to the GatC family. Heterotrimer of A, B and C subunits.

It carries out the reaction L-glutamyl-tRNA(Gln) + L-glutamine + ATP + H2O = L-glutaminyl-tRNA(Gln) + L-glutamate + ADP + phosphate + H(+). It catalyses the reaction L-aspartyl-tRNA(Asn) + L-glutamine + ATP + H2O = L-asparaginyl-tRNA(Asn) + L-glutamate + ADP + phosphate + 2 H(+). Allows the formation of correctly charged Asn-tRNA(Asn) or Gln-tRNA(Gln) through the transamidation of misacylated Asp-tRNA(Asn) or Glu-tRNA(Gln) in organisms which lack either or both of asparaginyl-tRNA or glutaminyl-tRNA synthetases. The reaction takes place in the presence of glutamine and ATP through an activated phospho-Asp-tRNA(Asn) or phospho-Glu-tRNA(Gln). The protein is Aspartyl/glutamyl-tRNA(Asn/Gln) amidotransferase subunit C of Clostridium botulinum (strain 657 / Type Ba4).